We begin with the raw amino-acid sequence, 265 residues long: MTTEDTLTIAGRSYQSRLLVGTGKYQDFAQTRAALDASGTQIVTVAIRRTNIGQNPDEPSLLDFVPPSQFTLLPNTAGCYSADDAVRTLRLARELLDGHDLVKLEVLGDPQNLFPNMPETLKATKTLVDEGFKVMVYCTDDPIQCRMLEDLGAVAVMPLASLIGSGMGILNPWNLRLIIDQSSVPVLVDAGVGTASDAAIAMELGCDGVLMNTAIAGARDPILMASAMRKAVEGGREAYLAGRVPRKLYSAAPSSPTEGLIAAAK.

The Schiff-base intermediate with DXP role is filled by K103. Residues G164, 190 to 191 (AG), and 212 to 213 (NT) each bind 1-deoxy-D-xylulose 5-phosphate.

This sequence belongs to the ThiG family. Homotetramer. Forms heterodimers with either ThiH or ThiS.

It localises to the cytoplasm. The catalysed reaction is [ThiS sulfur-carrier protein]-C-terminal-Gly-aminoethanethioate + 2-iminoacetate + 1-deoxy-D-xylulose 5-phosphate = [ThiS sulfur-carrier protein]-C-terminal Gly-Gly + 2-[(2R,5Z)-2-carboxy-4-methylthiazol-5(2H)-ylidene]ethyl phosphate + 2 H2O + H(+). Its pathway is cofactor biosynthesis; thiamine diphosphate biosynthesis. Functionally, catalyzes the rearrangement of 1-deoxy-D-xylulose 5-phosphate (DXP) to produce the thiazole phosphate moiety of thiamine. Sulfur is provided by the thiocarboxylate moiety of the carrier protein ThiS. In vitro, sulfur can be provided by H(2)S. This chain is Thiazole synthase, found in Bordetella pertussis (strain Tohama I / ATCC BAA-589 / NCTC 13251).